The sequence spans 388 residues: Succinate--CoA ligase [ADP-forming] subunit beta (388 aa).

The ATP-grasp domain occupies K9–H244. Residues K46, G53–G55, E99, S102, and E107 each bind ATP. Positions 199 and 213 each coordinate Mg(2+). Substrate-binding positions include N264 and G321–V323.

This sequence belongs to the succinate/malate CoA ligase beta subunit family. Heterotetramer of two alpha and two beta subunits. Mg(2+) serves as cofactor.

The enzyme catalyses succinate + ATP + CoA = succinyl-CoA + ADP + phosphate. It catalyses the reaction GTP + succinate + CoA = succinyl-CoA + GDP + phosphate. It functions in the pathway carbohydrate metabolism; tricarboxylic acid cycle; succinate from succinyl-CoA (ligase route): step 1/1. Functionally, succinyl-CoA synthetase functions in the citric acid cycle (TCA), coupling the hydrolysis of succinyl-CoA to the synthesis of either ATP or GTP and thus represents the only step of substrate-level phosphorylation in the TCA. The beta subunit provides nucleotide specificity of the enzyme and binds the substrate succinate, while the binding sites for coenzyme A and phosphate are found in the alpha subunit. This Psychromonas ingrahamii (strain DSM 17664 / CCUG 51855 / 37) protein is Succinate--CoA ligase [ADP-forming] subunit beta.